Here is a 1117-residue protein sequence, read N- to C-terminus: RNA-directed RNA polymerase (1117 aa).

Over residues 1 to 17 (MTVSGRSSWQNGKTTNA) the composition is skewed to polar residues. A disordered region spans residues 1 to 23 (MTVSGRSSWQNGKTTNAMRAGKL).

The enzyme catalyses RNA(n) + a ribonucleoside 5'-triphosphate = RNA(n+1) + diphosphate. Its function is as follows. RNA-dependent RNA polymerase which replicates the viral genome. The chain is RNA-directed RNA polymerase (p1) from Penicillium chrysogenum (Penicillium notatum).